Here is a 92-residue protein sequence, read N- to C-terminus: Small ribosomal subunit protein uS19c (92 aa).

It belongs to the universal ribosomal protein uS19 family.

The protein localises to the plastid. It localises to the chloroplast. In terms of biological role, protein S19 forms a complex with S13 that binds strongly to the 16S ribosomal RNA. The polypeptide is Small ribosomal subunit protein uS19c (Acorus calamus (Sweet flag)).